Consider the following 418-residue polypeptide: ATP-dependent RNA helicase RhlB (418 aa).

A Q motif motif is present at residues 9-37 (TKFADLPLEKSLISGLTSQGYEYCTPIQA). The 180-residue stretch at 40–219 (LPITLTGKDI…FEHMNDPESI (180 aa)) folds into the Helicase ATP-binding domain. 53 to 60 (AQTGTGKT) serves as a coordination point for ATP. Residues 165-168 (DEAD) carry the DEAD box motif. Residues 243–390 (KILLLLSLIE…CSEYDKNAML (148 aa)) enclose the Helicase C-terminal domain.

The protein belongs to the DEAD box helicase family. RhlB subfamily. Component of the RNA degradosome, which is a multiprotein complex involved in RNA processing and mRNA degradation.

It is found in the cytoplasm. It carries out the reaction ATP + H2O = ADP + phosphate + H(+). Functionally, DEAD-box RNA helicase involved in RNA degradation. Has RNA-dependent ATPase activity and unwinds double-stranded RNA. The protein is ATP-dependent RNA helicase RhlB of Psychromonas ingrahamii (strain DSM 17664 / CCUG 51855 / 37).